The following is a 291-amino-acid chain: tRNA-cytidine(32) 2-sulfurtransferase (291 aa).

Positions 36–41 (SGGKDS) match the PP-loop motif motif. The [4Fe-4S] cluster site is built by C111, C114, and C202. A disordered region spans residues 259–291 (DPWLDAEDEEAEDCGEPSAGDGVVSLGGARGGR). The span at 262–273 (LDAEDEEAEDCG) shows a compositional bias: acidic residues.

It belongs to the TtcA family. Homodimer. Mg(2+) serves as cofactor. It depends on [4Fe-4S] cluster as a cofactor.

The protein resides in the cytoplasm. It carries out the reaction cytidine(32) in tRNA + S-sulfanyl-L-cysteinyl-[cysteine desulfurase] + AH2 + ATP = 2-thiocytidine(32) in tRNA + L-cysteinyl-[cysteine desulfurase] + A + AMP + diphosphate + H(+). It participates in tRNA modification. Catalyzes the ATP-dependent 2-thiolation of cytidine in position 32 of tRNA, to form 2-thiocytidine (s(2)C32). The sulfur atoms are provided by the cysteine/cysteine desulfurase (IscS) system. The sequence is that of tRNA-cytidine(32) 2-sulfurtransferase from Anaeromyxobacter sp. (strain K).